The chain runs to 287 residues: Pyridoxal kinase PdxY (287 aa).

Substrate-binding positions include Ser9 and 44 to 45 (MQ). Positions 111, 142, 147, and 180 each coordinate ATP. Asp221 provides a ligand contact to substrate.

This sequence belongs to the pyridoxine kinase family. PdxY subfamily. In terms of assembly, homodimer. Mg(2+) serves as cofactor.

The enzyme catalyses pyridoxal + ATP = pyridoxal 5'-phosphate + ADP + H(+). The protein operates within cofactor metabolism; pyridoxal 5'-phosphate salvage; pyridoxal 5'-phosphate from pyridoxal: step 1/1. In terms of biological role, pyridoxal kinase involved in the salvage pathway of pyridoxal 5'-phosphate (PLP). Catalyzes the phosphorylation of pyridoxal to PLP. This Burkholderia thailandensis (strain ATCC 700388 / DSM 13276 / CCUG 48851 / CIP 106301 / E264) protein is Pyridoxal kinase PdxY.